Reading from the N-terminus, the 583-residue chain is Pentatricopeptide repeat-containing protein At2g33760 (583 aa).

PPR repeat units lie at residues 71-105, 106-140, 141-171, 172-206, 207-241, 242-276, 277-303, 309-339, and 345-379; these read DDFLFNSVIKSTSKLRLPLHCVAYYRRMLSSNVSP, SNYTFTSVIKSCADLSALRIGKGVHCHAVVSGFGL, DTYVQAALVTFYSKCGDMEGARQVFDRMPEK, SIVAWNSLVSGFEQNGLADEAIQVFYQMRESGFEP, DSATFVSLLSACAQTGAVSLGSWVHQYIISEGLDL, NVKLGTALINLYSRCGDVGKAREVFDKMKETNVAA, WTAMISAYGTHGYGQQAVELFNKMEDD, NNVTFVAVLSACAHAGLVEEGRSVYKRMTKS, and GVEHHVCMVDMLGRAGFLDEAYKFIHQLDATGKAT. The interval 383–458 is type E motif; sequence LWTAMLGACK…QVGYSVIEVE (76 aa). The type E(+) motif stretch occupies residues 459-489; that stretch reads NKTYMFSMGDESHQETGEIYRYLETLISRCK. The tract at residues 490 to 583 is type DYW motif; that stretch reads EIGYAPVSEE…NGSCSCLDYW (94 aa).

It belongs to the PPR family. PCMP-H subfamily.

The sequence is that of Pentatricopeptide repeat-containing protein At2g33760 (PCMP-H6) from Arabidopsis thaliana (Mouse-ear cress).